We begin with the raw amino-acid sequence, 64 residues long: Cytochrome c oxidase subunit 9, mitochondrial (64 aa).

Topologically, residues 1-15 (MAATAVRPITGMLRR) are mitochondrial matrix. The chain crosses the membrane as a helical span at residues 16–36 (GLILDIGIALGVGFVMANGYW). Residues 37-64 (YGYHMPRTNARDNYYKKLEEERAARMGA) are Mitochondrial intermembrane-facing.

It belongs to the fungal cytochrome c oxidase subunit 7a family. Component of the cytochrome c oxidase (complex IV, CIV), a multisubunit enzyme composed of 11 subunits. The complex is composed of a catalytic core of 3 subunits Cox1, Cox2 and Cox3, encoded in the mitochondrial DNA, and 8 supernumerary subunits Cox4, Cox5a/Cox5, Cox6, Cox7, Cox8, Cox7a/Cox9, Cox6b/Cox12 and Cox6a/Cox13, which are encoded in the nuclear genome. The complex exists as a monomer or a dimer and forms respiratory supercomplexes (SCs) in the inner mitochondrial membrane with NADH-ubiquinone oxidoreductase (complex I, CI) and ubiquinol-cytochrome c oxidoreductase (cytochrome b-c1 complex, complex III, CIII), resulting in various different assemblies (supercomplexes I(1)IV(1), I(1)III(3)IV(2), III(2)IV(1) and III(2)IV(2) as well as larger supercomplexes of compositions like I(1)III(2)IV(5-6)).

Its subcellular location is the mitochondrion inner membrane. Its pathway is energy metabolism; oxidative phosphorylation. Functionally, component of the cytochrome c oxidase, the last enzyme in the mitochondrial electron transport chain which drives oxidative phosphorylation. The respiratory chain contains 3 multisubunit complexes succinate dehydrogenase (complex II, CII), ubiquinol-cytochrome c oxidoreductase (cytochrome b-c1 complex, complex III, CIII) and cytochrome c oxidase (complex IV, CIV), that cooperate to transfer electrons derived from NADH and succinate to molecular oxygen, creating an electrochemical gradient over the inner membrane that drives transmembrane transport and the ATP synthase. Cytochrome c oxidase is the component of the respiratory chain that catalyzes the reduction of oxygen to water. Electrons originating from reduced cytochrome c in the intermembrane space (IMS) are transferred via the dinuclear copper A center (CU(A)) of Cox2 and heme A of Cox1 to the active site in Cox1, a binuclear center (BNC) formed by heme A3 and copper B (CU(B)). The BNC reduces molecular oxygen to 2 water molecules using 4 electrons from cytochrome c in the IMS and 4 protons from the mitochondrial matrix. The polypeptide is Cytochrome c oxidase subunit 9, mitochondrial (cox-17) (Neurospora crassa (strain ATCC 24698 / 74-OR23-1A / CBS 708.71 / DSM 1257 / FGSC 987)).